A 334-amino-acid chain; its full sequence is Phosphate acyltransferase (334 aa).

It belongs to the PlsX family. As to quaternary structure, homodimer. Probably interacts with PlsY.

The protein localises to the cytoplasm. The enzyme catalyses a fatty acyl-[ACP] + phosphate = an acyl phosphate + holo-[ACP]. It participates in lipid metabolism; phospholipid metabolism. Functionally, catalyzes the reversible formation of acyl-phosphate (acyl-PO(4)) from acyl-[acyl-carrier-protein] (acyl-ACP). This enzyme utilizes acyl-ACP as fatty acyl donor, but not acyl-CoA. The sequence is that of Phosphate acyltransferase from Clostridium kluyveri (strain NBRC 12016).